A 274-amino-acid polypeptide reads, in one-letter code: 4-deoxy-L-threo-5-hexosulose-uronate ketol-isomerase (274 aa).

Histidine 192, histidine 194, glutamate 199, and histidine 241 together coordinate Zn(2+).

It belongs to the KduI family. Zn(2+) serves as cofactor.

The enzyme catalyses 5-dehydro-4-deoxy-D-glucuronate = 3-deoxy-D-glycero-2,5-hexodiulosonate. The protein operates within glycan metabolism; pectin degradation; 2-dehydro-3-deoxy-D-gluconate from pectin: step 4/5. Functionally, catalyzes the isomerization of 5-dehydro-4-deoxy-D-glucuronate to 3-deoxy-D-glycero-2,5-hexodiulosonate. This Cereibacter sphaeroides (strain ATCC 17029 / ATH 2.4.9) (Rhodobacter sphaeroides) protein is 4-deoxy-L-threo-5-hexosulose-uronate ketol-isomerase.